The primary structure comprises 132 residues: Large ribosomal subunit protein bL17 (132 aa).

It belongs to the bacterial ribosomal protein bL17 family. In terms of assembly, part of the 50S ribosomal subunit. Contacts protein L32.

This chain is Large ribosomal subunit protein bL17, found in Shewanella woodyi (strain ATCC 51908 / MS32).